The primary structure comprises 273 residues: 2,3,4,5-tetrahydropyridine-2,6-dicarboxylate N-succinyltransferase (273 aa).

The substrate site is built by arginine 104 and aspartate 141.

The protein belongs to the transferase hexapeptide repeat family. Homotrimer.

The protein resides in the cytoplasm. The enzyme catalyses (S)-2,3,4,5-tetrahydrodipicolinate + succinyl-CoA + H2O = (S)-2-succinylamino-6-oxoheptanedioate + CoA. Its pathway is amino-acid biosynthesis; L-lysine biosynthesis via DAP pathway; LL-2,6-diaminopimelate from (S)-tetrahydrodipicolinate (succinylase route): step 1/3. The chain is 2,3,4,5-tetrahydropyridine-2,6-dicarboxylate N-succinyltransferase from Psychrobacter cryohalolentis (strain ATCC BAA-1226 / DSM 17306 / VKM B-2378 / K5).